The primary structure comprises 404 residues: MQIGQRLGTPLSPSATRVMLLGAGELGKEVIIALQRLGVEVVAVDRYPDAPGHQVAHRAHVIDMTDAAALRAIVEAERPHLIVPEIEAIATDALAAIEAAGLAEVIPTARATQLTMNREGIRRLAAEELGLPTSPYAFADSFEAFSAAIAKIGMPCVVKPVMSSSGKGQSVVKTEADVKPAWDYAMAGGRVNHGRVIVEGFIDFDYEITQLTVRAIDPATDATRTYFCEPVGHVQVAGDYVESWQPQPMSAVALEKSREIAHKVTEALGGRGMFGVELFVNGDDVWFSEVSPRPHDTGLVTLASQRQSEFELHARAILGLPVDPALGTPAASAVIYGGLDERGIAFEGVREALAVPGADLRLFGKPESFAKRRMGVALATGATVDEARERAKRAAAAVRPVSAR.

N(1)-(5-phospho-beta-D-ribosyl)glycinamide is bound by residues 25–26 (EL) and Glu-85. Residues Arg-118, Lys-159, 164–169 (SSGKGQ), 199–202 (EGFI), and Glu-207 each bind ATP. Residues 123 to 318 (RLAAEELGLP…EFELHARAIL (196 aa)) enclose the ATP-grasp domain. Positions 277 and 289 each coordinate Mg(2+). Residues Asp-296, Lys-365, and 372 to 373 (RR) each bind N(1)-(5-phospho-beta-D-ribosyl)glycinamide.

This sequence belongs to the PurK/PurT family. In terms of assembly, homodimer.

It catalyses the reaction N(1)-(5-phospho-beta-D-ribosyl)glycinamide + formate + ATP = N(2)-formyl-N(1)-(5-phospho-beta-D-ribosyl)glycinamide + ADP + phosphate + H(+). It functions in the pathway purine metabolism; IMP biosynthesis via de novo pathway; N(2)-formyl-N(1)-(5-phospho-D-ribosyl)glycinamide from N(1)-(5-phospho-D-ribosyl)glycinamide (formate route): step 1/1. Functionally, involved in the de novo purine biosynthesis. Catalyzes the transfer of formate to 5-phospho-ribosyl-glycinamide (GAR), producing 5-phospho-ribosyl-N-formylglycinamide (FGAR). Formate is provided by PurU via hydrolysis of 10-formyl-tetrahydrofolate. The chain is Formate-dependent phosphoribosylglycinamide formyltransferase from Burkholderia lata (strain ATCC 17760 / DSM 23089 / LMG 22485 / NCIMB 9086 / R18194 / 383).